Here is a 479-residue protein sequence, read N- to C-terminus: Poly(A) polymerase catalytic subunit (479 aa).

Catalysis depends on residues Asp202 and Asp204. Residues Asp202, Asp204, and Asp253 each contribute to the Ca(2+) site.

Belongs to the poxviridae poly(A) polymerase catalytic subunit family. As to quaternary structure, heterodimer of a large (catalytic) subunit and a small (regulatory) subunit.

It catalyses the reaction RNA(n) + ATP = RNA(n)-3'-adenine ribonucleotide + diphosphate. Its function is as follows. Polymerase that creates the 3'-poly(A) tail of mRNA's. This is Poly(A) polymerase catalytic subunit (OPG063) from Bos taurus (Bovine).